We begin with the raw amino-acid sequence, 217 residues long: Dense granule protein 1 (217 aa).

Residues 1–19 form the signal peptide; sequence MARQATFIVALCVCGLAIA. The span at 171–183 shows a compositional bias: polar residues; it reads VASEDSALGNSEE. Residues 171 to 217 form a disordered region; sequence VASEDSALGNSEEQYVEGTVNGSSDPEQERAGGPLIPEGDEQEVDTE. Residue N191 is glycosylated (N-linked (GlcNAc...) asparagine). Over residues 208-217 the composition is skewed to acidic residues; the sequence is EGDEQEVDTE.

It belongs to the Gra7 family.

It localises to the secreted. The polypeptide is Dense granule protein 1 (DG1) (Neospora caninum (Coccidian parasite)).